A 319-amino-acid polypeptide reads, in one-letter code: Proline hydroxylase buaE (319 aa).

The Fe2OG dioxygenase domain occupies 168-280 (NSSELRLNHY…RYSIAYFGKP (113 aa)). Positions 195, 197, and 255 each coordinate Fe cation. Residue Arg-271 coordinates 2-oxoglutarate.

Belongs to the iron/ascorbate-dependent oxidoreductase family. Fe(2+) serves as cofactor.

The protein operates within mycotoxin biosynthesis. Functionally, proline hydroxylase; part of the gene cluster that mediates the biosynthesis of burnettramic acids, an unusual class of bolaamphiphilic pyrrolizidinediones that display potent antibacterial, antifungal, and cytotoxic activities. The first step of the biosynthesis of burnettramic acids is the hydroxylation of proline by the proline hydroxylase buaE to generate 4-hydroxyproline. The PKS-NRPS buaA and trans-enoyl reductase buaC construct the highly reduced polyketide chain, and the condensation (C) domain of buaA then catalyzes the amide bond formation with the activated 4-hydroxyproline. This is followed by the R domain releasing the nascent polyketide-peptide directly via a Dieckmann condensation to afford a tetramic acid fused to the hydroxyproline, generating the bicyclic pyrrolidinedione moiety. The cytochrome P450 monooxygenases buaD and buaG are likely responsible for the multiple hydroxylations on the polyketide chain and its terminus, although in the heterologous context, buaD does not appear to be required. Therefore, while buaG may be a multifunctional cytochrome P450 monooxygenase, it cannot be ruled out that the two secondary alcohols on the polyketide chain could have an acetate origin. Finally, the glycosyltransferase buaB transfers beta-D-mannose to the aglycone burnettramic acid A to form burnettramic acid A. Burnettramic acid B is a minor cis-pyrrolizidine epimer of burnettramic acid A and it is likely that small amounts of it form naturally in acidic environments. The polypeptide is Proline hydroxylase buaE (Petromyces alliaceus (Aspergillus alliaceus)).